Here is a 540-residue protein sequence, read N- to C-terminus: Coiled-coil domain-containing protein 116 (540 aa).

The stretch at 79–102 (QVLDSLQTVVEQATECVATMKTEA) forms a coiled coil. The tract at residues 347–400 (PGNSDLQPSSKASLPTDREARGETCYSPTSASSPKTSHRKSKDRRGSPSNAVQM) is disordered. Polar residues-rich tracts occupy residues 350–359 (SDLQPSSKAS) and 372–381 (YSPTSASSPK). Ser-393 is modified (phosphoserine).

Its subcellular location is the cytoplasm. It localises to the cytoskeleton. The protein localises to the microtubule organizing center. The protein resides in the centrosome. The sequence is that of Coiled-coil domain-containing protein 116 (Ccdc116) from Rattus norvegicus (Rat).